Consider the following 621-residue polypeptide: UvrABC system protein C (621 aa).

The region spanning 13 to 92 (NEPGVYLMKN…IKKYSPKYNI (80 aa)) is the GIY-YIG domain. The UVR domain occupies 204–239 (RSLLNKLKEEMQSASGNLEFEKAASLRDKMIAIENI).

It belongs to the UvrC family. As to quaternary structure, interacts with UvrB in an incision complex.

It is found in the cytoplasm. Functionally, the UvrABC repair system catalyzes the recognition and processing of DNA lesions. UvrC both incises the 5' and 3' sides of the lesion. The N-terminal half is responsible for the 3' incision and the C-terminal half is responsible for the 5' incision. This chain is UvrABC system protein C, found in Clostridium beijerinckii (strain ATCC 51743 / NCIMB 8052) (Clostridium acetobutylicum).